The primary structure comprises 247 residues: Mannose-P-dolichol utilization defect 1 protein (247 aa).

Residue Ala-2 is modified to N-acetylalanine. 7 consecutive transmembrane segments (helical) span residues 37–57 (CLKI…SLLV), 74–94 (LSLQ…VYSI), 100–120 (FSSW…CFLV), 128–145 (VKGV…LALL), 151–171 (LAVV…GKLL), 185–205 (LSAI…FTSV), and 213–233 (MAGV…QVLF). A PQ-loop 1 domain is found at 39–105 (KILLSKGLGL…NNFPFSSWGE (67 aa)). The region spanning 159–216 (ASNVPAVVVGKLLQAATNYRNGHTGQLSAITVFMLFGGSLARIFTSVQETGDPLMAGV) is the PQ-loop 2 domain.

Belongs to the MPDU1 (TC 2.A.43.3) family.

It is found in the membrane. Functionally, required for normal utilization of mannose-dolichol phosphate (Dol-P-Man) in the synthesis of N-linked and O-linked oligosaccharides and GPI anchors. In Mus musculus (Mouse), this protein is Mannose-P-dolichol utilization defect 1 protein (Mpdu1).